Here is a 755-residue protein sequence, read N- to C-terminus: 1,4-alpha-glucan branching enzyme GlgB (755 aa).

D431 (nucleophile) is an active-site residue. E484 serves as the catalytic Proton donor.

It belongs to the glycosyl hydrolase 13 family. GlgB subfamily. Monomer.

The catalysed reaction is Transfers a segment of a (1-&gt;4)-alpha-D-glucan chain to a primary hydroxy group in a similar glucan chain.. It functions in the pathway glycan biosynthesis; glycogen biosynthesis. In terms of biological role, catalyzes the formation of the alpha-1,6-glucosidic linkages in glycogen by scission of a 1,4-alpha-linked oligosaccharide from growing alpha-1,4-glucan chains and the subsequent attachment of the oligosaccharide to the alpha-1,6 position. In Prochlorococcus marinus (strain NATL1A), this protein is 1,4-alpha-glucan branching enzyme GlgB.